The following is a 585-amino-acid chain: A-type ATP synthase subunit A (585 aa).

Residue G237–T244 participates in ATP binding.

This sequence belongs to the ATPase alpha/beta chains family. Has multiple subunits with at least A(3), B(3), C, D, E, F, H, I and proteolipid K(x).

The protein localises to the cell membrane. The catalysed reaction is ATP + H2O + 4 H(+)(in) = ADP + phosphate + 5 H(+)(out). Functionally, component of the A-type ATP synthase that produces ATP from ADP in the presence of a proton gradient across the membrane. The A chain is the catalytic subunit. This is A-type ATP synthase subunit A from Natronomonas pharaonis (strain ATCC 35678 / DSM 2160 / CIP 103997 / JCM 8858 / NBRC 14720 / NCIMB 2260 / Gabara) (Halobacterium pharaonis).